The chain runs to 322 residues: Ribosomal RNA small subunit methyltransferase H (322 aa).

S-adenosyl-L-methionine is bound by residues 35–37, Asp52, Phe79, Asp100, and Gln107; that span reads GGY. The interval 254-322 is disordered; that stretch reads GATPAGSRHL…TAPKKEGRQG (69 aa). The span at 295–309 shows a compositional bias: low complexity; it reads SRSATLRVARRTAAA.

This sequence belongs to the methyltransferase superfamily. RsmH family.

It is found in the cytoplasm. It carries out the reaction cytidine(1402) in 16S rRNA + S-adenosyl-L-methionine = N(4)-methylcytidine(1402) in 16S rRNA + S-adenosyl-L-homocysteine + H(+). Its function is as follows. Specifically methylates the N4 position of cytidine in position 1402 (C1402) of 16S rRNA. The chain is Ribosomal RNA small subunit methyltransferase H from Rhizorhabdus wittichii (strain DSM 6014 / CCUG 31198 / JCM 15750 / NBRC 105917 / EY 4224 / RW1) (Sphingomonas wittichii).